The following is a 572-amino-acid chain: Acyl-coenzyme A synthetase ACSM2, mitochondrial (572 aa).

The N-terminal 46 residues, 1–46, are a transit peptide targeting the mitochondrion; it reads MHWLWKIPRLCTFWGTEMFHRTFHMNIKKLMPIQWGHQEVPAKFNF. Gln-139 is a CoA binding site. ATP contacts are provided by residues 221 to 229, 359 to 364, Asp-446, and Arg-461; these read TSGTSGPPK and EIYGQT. Thr-364 is a binding site for substrate. Residue 469 to 471 participates in CoA binding; that stretch reads SGY. Arg-472 lines the substrate pocket. CoA contacts are provided by residues Arg-501, Lys-532, and 540–542; that span reads YPR. Lys-557 provides a ligand contact to ATP.

Belongs to the ATP-dependent AMP-binding enzyme family. As to quaternary structure, monomer. Mg(2+) is required as a cofactor. Mn(2+) serves as cofactor. Detected in kidney, in proximal tubules.

The protein localises to the mitochondrion. It carries out the reaction a medium-chain fatty acid + ATP + CoA = a medium-chain fatty acyl-CoA + AMP + diphosphate. The catalysed reaction is benzoate + ATP + CoA = benzoyl-CoA + AMP + diphosphate. It catalyses the reaction hexanoate + ATP + CoA = hexanoyl-CoA + AMP + diphosphate. The enzyme catalyses butanoate + ATP + CoA = butanoyl-CoA + AMP + diphosphate. It carries out the reaction octanoate + ATP + CoA = octanoyl-CoA + AMP + diphosphate. The catalysed reaction is decanoate + ATP + CoA = decanoyl-CoA + AMP + diphosphate. In terms of biological role, catalyzes the activation of fatty acids by CoA to produce an acyl-CoA, the first step in fatty acid metabolism. Capable of activating medium-chain fatty acids (e.g. butyric (C4) to decanoic (C10) acids), and certain carboxylate-containing xenobiotics, e.g. benzoate. The chain is Acyl-coenzyme A synthetase ACSM2, mitochondrial (Acsm2) from Rattus norvegicus (Rat).